A 208-amino-acid chain; its full sequence is MRHRKSGVKLGRTGSHRNAMFRNMVTSLLKHEKIQTTDAKAKELRRWADHVITLAKRGDLHARRQVMAIVREKNVVHKLFAEAAERFGSREGGYTRLTKIGARPGDAAPVTLIELVSLTETTEKKKKKPAKTAAKPAPTPSAPAVEKEAAADTPAPAAEESAPAKAAEPEAEAAAPEAEAAPEEPEVPAADTPVEDDGASEEAPPKTE.

Residues 122–208 (TEKKKKKPAK…ASEEAPPKTE (87 aa)) are disordered. The span at 151-179 (ADTPAPAAEESAPAKAAEPEAEAAAPEAE) shows a compositional bias: low complexity.

The protein belongs to the bacterial ribosomal protein bL17 family. As to quaternary structure, part of the 50S ribosomal subunit. Contacts protein L32.

This Desulfosudis oleivorans (strain DSM 6200 / JCM 39069 / Hxd3) (Desulfococcus oleovorans) protein is Large ribosomal subunit protein bL17.